Reading from the N-terminus, the 824-residue chain is AMP deaminase 2 (824 aa).

The segment at 1–43 (MASYPGPGKSKAKYPFKKRASLQASAAAPEARSGLGASPLQSA) is disordered. The span at 10 to 20 (SKAKYPFKKRA) shows a compositional bias: basic residues. Phosphoserine is present on Ser21. Residues 21 to 33 (SLQASAAAPEARS) are compositionally biased toward low complexity. Arg44 carries the post-translational modification Omega-N-methylarginine. Phosphoserine occurs at positions 45, 63, and 79. Residue Tyr90 is modified to Phosphotyrosine. Phosphoserine occurs at positions 96 and 113. Position 133 is a phosphothreonine (Thr133). Phosphoserine occurs at positions 135 and 137. Residues His364 and His366 each coordinate Zn(2+). Substrate is bound by residues His366 and 435-440 (KFNAKY). His633 is a Zn(2+) binding site. A substrate-binding site is contributed by Glu636. His655 (proton acceptor) is an active-site residue. Asp710 contributes to the Zn(2+) binding site. Position 711-714 (711-714 (DPLQ)) interacts with substrate.

This sequence belongs to the metallo-dependent hydrolases superfamily. Adenosine and AMP deaminases family. As to quaternary structure, homotetramer. Zn(2+) serves as cofactor.

The catalysed reaction is AMP + H2O + H(+) = IMP + NH4(+). The protein operates within purine metabolism; IMP biosynthesis via salvage pathway; IMP from AMP: step 1/1. Functionally, AMP deaminase plays a critical role in energy metabolism. Catalyzes the deamination of AMP to IMP and plays an important role in the purine nucleotide cycle. This Rattus norvegicus (Rat) protein is AMP deaminase 2.